A 196-amino-acid chain; its full sequence is Phosphoheptose isomerase (196 aa).

One can recognise an SIS domain in the interval 38–196; that stretch reads LIAGYRAGAR…VEHALFAPRQ (159 aa). 53–55 lines the substrate pocket; that stretch reads NGG. Zn(2+) is bound by residues histidine 62 and glutamate 66. Residues glutamate 66, 95-96, 121-123, serine 126, and glutamine 173 contribute to the substrate site; these read ND and STS. Residues glutamine 173 and histidine 181 each contribute to the Zn(2+) site.

It belongs to the SIS family. GmhA subfamily. It depends on Zn(2+) as a cofactor.

It localises to the cytoplasm. The enzyme catalyses 2 D-sedoheptulose 7-phosphate = D-glycero-alpha-D-manno-heptose 7-phosphate + D-glycero-beta-D-manno-heptose 7-phosphate. It participates in carbohydrate biosynthesis; D-glycero-D-manno-heptose 7-phosphate biosynthesis; D-glycero-alpha-D-manno-heptose 7-phosphate and D-glycero-beta-D-manno-heptose 7-phosphate from sedoheptulose 7-phosphate: step 1/1. Catalyzes the isomerization of sedoheptulose 7-phosphate in D-glycero-D-manno-heptose 7-phosphate. The sequence is that of Phosphoheptose isomerase from Mycobacterium bovis (strain ATCC BAA-935 / AF2122/97).